Consider the following 131-residue polypeptide: Global transcriptional regulator Spx (131 aa).

C10 and C13 are oxidised to a cystine.

Belongs to the ArsC family. Spx subfamily. In terms of assembly, interacts with the C-terminal domain of the alpha subunit of the RNAP.

It localises to the cytoplasm. Functionally, global transcriptional regulator that plays a key role in stress response and exerts either positive or negative regulation of genes. Acts by interacting with the C-terminal domain of the alpha subunit of the RNA polymerase (RNAP). This interaction can enhance binding of RNAP to the promoter region of target genes and stimulate their transcription, or block interaction of RNAP with activator. This chain is Global transcriptional regulator Spx, found in Staphylococcus epidermidis (strain ATCC 35984 / DSM 28319 / BCRC 17069 / CCUG 31568 / BM 3577 / RP62A).